The chain runs to 137 residues: MATNKSIKSVVICVLILGLVLEQVQVEAKSCCKNTTGRNCYNACRFAGGSRPVCATACGCKIISGPTCPRDYPKLNLLPESGEPNATEYCTIGCRTSVCDNMDNVSRGQEMKFDMGLCSNACARFCNDGEVIQSVEA.

The first 28 residues, 1 to 28 (MATNKSIKSVVICVLILGLVLEQVQVEA), serve as a signal peptide directing secretion. 4 cysteine pairs are disulfide-bonded: cysteine 31-cysteine 68, cysteine 32-cysteine 60, cysteine 40-cysteine 58, and cysteine 44-cysteine 54. Positions 75–137 (LNLLPESGEP…DGEVIQSVEA (63 aa)) are cleaved as a propeptide — acidic domain.

It belongs to the plant thionin (TC 1.C.44) family. 4 C-C subfamily.

It localises to the secreted. In terms of biological role, thionins are small plant proteins which are toxic to animal cells. They seem to exert their toxic effect at the level of the cell membrane. Their precise function is not known. This chain is Leaf-specific thionin (THI1.5), found in Hordeum vulgare (Barley).